The chain runs to 630 residues: Adenine DNA glycosylase (630 aa).

Positions 54–72 (MRKCREKKEAEREAEREAE) are enriched in basic and acidic residues. The disordered stretch occupies residues 54–123 (MRKCREKKEA…ALGGDIEDLF (70 aa)). Acidic residues predominate over residues 73–123 (REAEEEEKAEEAEAEADKEEAEEESEEEEEEEEEEAEAEEEALGGDIEDLF). Glu168 (proton donor/acceptor) is an active-site residue. Residues Cys341, Cys348, Cys351, and Cys357 each contribute to the [4Fe-4S] cluster site. The 154-residue stretch at 383–536 (PRHDFCCVCV…RKVPPFRLQH (154 aa)) folds into the Nudix hydrolase domain. A Nudix box motif is present at residues 427–451 (VILNEEADSATRRNAINVYLKEAFR).

This sequence belongs to the Nth/MutY family. [4Fe-4S] cluster serves as cofactor.

The protein resides in the nucleus. The enzyme catalyses Hydrolyzes free adenine bases from 7,8-dihydro-8-oxoguanine:adenine mismatched double-stranded DNA, leaving an apurinic site.. In terms of biological role, involved in oxidative DNA damage repair. Initiates repair of A*oxoG to C*G by removing the inappropriately paired adenine base from the DNA backbone. Possesses both adenine and 2-OH-A DNA glycosylase activities. This is Adenine DNA glycosylase (MYH) from Arabidopsis thaliana (Mouse-ear cress).